The chain runs to 529 residues: Glutamyl-tRNA reductase (529 aa).

Position 47-50 (47-50 (TCNR)) interacts with substrate. Cysteine 48 acts as the Nucleophile in catalysis. Positions 56–80 (SPRQQAPAPPRPGSAPPPSDEELSR) are disordered. The segment covering 62 to 73 (PAPPRPGSAPPP) has biased composition (pro residues). Residues serine 125, 130-132 (EPQ), and glutamine 136 contribute to the substrate site. 205-210 (GAGDMA) is a binding site for NADP(+). The disordered stretch occupies residues 454-505 (RGAVDGPPTPRSARGAAPPASGARGGGSPRHADPRPQAAEDNGVYARQPGGR). A compositionally biased stretch (low complexity) spans 464-475 (RSARGAAPPASG).

It belongs to the glutamyl-tRNA reductase family. In terms of assembly, homodimer.

The catalysed reaction is (S)-4-amino-5-oxopentanoate + tRNA(Glu) + NADP(+) = L-glutamyl-tRNA(Glu) + NADPH + H(+). It functions in the pathway porphyrin-containing compound metabolism; protoporphyrin-IX biosynthesis; 5-aminolevulinate from L-glutamyl-tRNA(Glu): step 1/2. Its function is as follows. Catalyzes the NADPH-dependent reduction of glutamyl-tRNA(Glu) to glutamate 1-semialdehyde (GSA). The protein is Glutamyl-tRNA reductase of Sorangium cellulosum (strain So ce56) (Polyangium cellulosum (strain So ce56)).